Reading from the N-terminus, the 116-residue chain is uncharacterized protein (116 aa).

The chain crosses the membrane as a helical span at residues 89-109; it reads VGFVILILLYILTNPNAIELI.

It belongs to the M.jannaschii MJ0023/MJ0349/MJ1072/MJ1074/MJ1107/MJECL16 family.

It is found in the membrane. This is an uncharacterized protein from Methanocaldococcus jannaschii (strain ATCC 43067 / DSM 2661 / JAL-1 / JCM 10045 / NBRC 100440) (Methanococcus jannaschii).